The sequence spans 333 residues: Protoheme IX farnesyltransferase (333 aa).

8 helical membrane-spanning segments follow: residues 63–83 (LACT…LNCI), 109–129 (AAFI…VSGV), 132–152 (LAAG…TAIL), 160–180 (IVIG…AASG), 188–208 (WLFS…ALLL), 214–234 (AVGI…RAIS), 245–265 (GFGV…LIPF), and 292–312 (WSIF…LPMA).

It belongs to the UbiA prenyltransferase family. Protoheme IX farnesyltransferase subfamily.

It is found in the cell inner membrane. It catalyses the reaction heme b + (2E,6E)-farnesyl diphosphate + H2O = Fe(II)-heme o + diphosphate. It participates in porphyrin-containing compound metabolism; heme O biosynthesis; heme O from protoheme: step 1/1. Functionally, converts heme B (protoheme IX) to heme O by substitution of the vinyl group on carbon 2 of heme B porphyrin ring with a hydroxyethyl farnesyl side group. The sequence is that of Protoheme IX farnesyltransferase from Prochlorococcus marinus (strain MIT 9313).